Reading from the N-terminus, the 195-residue chain is Glycine-rich protein A3 (195 aa).

Disordered regions lie at residues 23 to 103 (AGGG…GVAG) and 159 to 182 (VMES…GSNL). Over residues 47-77 (PAGGGYPPQGYPPAGGGYPPQGYPPAGGGYP) the composition is skewed to gly residues. Positions 82 to 94 (PPAGHHSGSSAPH) are enriched in low complexity. A compositionally biased stretch (basic and acidic residues) spans 163 to 175 (LSRESTGRARSTD).

In Daucus carota (Wild carrot), this protein is Glycine-rich protein A3.